The chain runs to 324 residues: Fructose-1,6-bisphosphatase class 1 (324 aa).

Residues Glu-88, Asp-107, Leu-109, and Asp-110 each coordinate Mg(2+). Residues 110 to 113 (DGSS), Asn-199, and Lys-265 contribute to the substrate site. Glu-271 serves as a coordination point for Mg(2+).

Belongs to the FBPase class 1 family. In terms of assembly, homotetramer. Mg(2+) is required as a cofactor.

The protein localises to the cytoplasm. The enzyme catalyses beta-D-fructose 1,6-bisphosphate + H2O = beta-D-fructose 6-phosphate + phosphate. Its pathway is carbohydrate biosynthesis; gluconeogenesis. The chain is Fructose-1,6-bisphosphatase class 1 from Neisseria gonorrhoeae (strain ATCC 700825 / FA 1090).